The following is a 238-amino-acid chain: Aliphatic sulfonates import ATP-binding protein SsuB (238 aa).

The region spanning 7 to 221 (VSLHQVHQQF…RPGDAAFASL (215 aa)) is the ABC transporter domain. Position 39–46 (39–46 (GRSGSGKT)) interacts with ATP.

It belongs to the ABC transporter superfamily. Aliphatic sulfonates importer (TC 3.A.1.17.2) family. In terms of assembly, the complex is composed of two ATP-binding proteins (SsuB), two transmembrane proteins (SsuC) and a solute-binding protein (SsuA).

It localises to the cell inner membrane. It catalyses the reaction ATP + H2O + aliphatic sulfonate-[sulfonate-binding protein]Side 1 = ADP + phosphate + aliphatic sulfonateSide 2 + [sulfonate-binding protein]Side 1.. Its function is as follows. Part of the ABC transporter complex SsuABC involved in aliphatic sulfonates import. Responsible for energy coupling to the transport system. The protein is Aliphatic sulfonates import ATP-binding protein SsuB of Granulibacter bethesdensis (strain ATCC BAA-1260 / CGDNIH1).